Here is a 72-residue protein sequence, read N- to C-terminus: Candidate secreted effector protein MPL124499 (72 aa).

An N-terminal signal peptide occupies residues 1–21; that stretch reads MKLSIFAAIFMAFVSLNQVFG.

This sequence belongs to the CPGH1 family.

It localises to the secreted. The protein resides in the host cell. It is found in the host cytoplasm. Its subcellular location is the host nucleus. Rust effector delivered into infected tissues to modulate host functions and contribute to pathogen virulence. Enhances leaf colonization by the bacteria Pseudomonas syringae and the oomycete Hyaloperonospora arabidopsidis pathogens in an Arabidopsis thaliana infection model. This chain is Candidate secreted effector protein MPL124499, found in Melampsora larici-populina (strain 98AG31 / pathotype 3-4-7) (Poplar leaf rust fungus).